A 433-amino-acid polypeptide reads, in one-letter code: MANIQGGQQIGTNQGKGQSAADKLALFLKVFGGEVLTAFARTSVTMPRHMLRSIASGKSAQFPVIGRTKAAYLKPGENLDDKRKDIKHTEKVIHIDGLLTADVLIYDIEDAMNHYDVRAEYTAQLGESLAMAADGAVLAELAGLVNLPDGSNENIEGLGKPTVLTLVKPTTGSLTDPVELGKAIIAQLTIARASLTKNYVPAADRTFYTTPDNYSAILAALMPNAANYQALLDPERGTIRNVMGFEVVEVPHLTAGGAGDTREDAPADQKHAFPATSSTTVKVALDNVVGLFQHRSAVGTVKLKDLALERARRANYQADQIIAKYAMGHGGLRPEAAGAIVLPKGVGVIPDPTGVTLSQKTMTLVEGASRALTGTVQPSDANQSLSWSSSAEDVAVWEAGKVVAKGVGTADITATTSNGLIASCKVIVNAATS.

The BIG2 domain maps to Thr-353–Gly-419.

Belongs to the T7virus minor capsid protein family. Interacts with the connector protein and the major capsid protein.

It is found in the virion. Functionally, assembles with the major capsid protein to form an icosahedral capsid with a T=7 symmetry, about 60 nm in diameter, and consisting of 415 capsid proteins. The major and minor capsid proteins are incorporated into the capsid in about a 90/10 ratio respectively. Once the capsid is formed, encapsidates one single copy of the viral genome. The polypeptide is Minor capsid protein (10) (Escherichia coli (Bacteriophage T3)).